The primary structure comprises 207 residues: MRELTKRQSEIYNYIKQVVQMKGYPPSVREIGEAVGLASSSTVHGHLSRLEEKGYIRRDPTKPRAIEIVSDQTNDNINMEETIHVPVIGKVTAGVPITAVENIEEYFPLPEHLTSTHNSDIFILNVVGDSMIEAGILDGDKVIVRSQTIAENGDIIVAMTEEDEATVKRFYKEKNRYRLQPENSTMEPIYLDNVAVIGKVIGLYREM.

A DNA-binding region (H-T-H motif) is located at residues 28–48 (VREIGEAVGLASSSTVHGHLS). Catalysis depends on for autocatalytic cleavage activity residues Ser-130 and Lys-168.

Belongs to the peptidase S24 family. As to quaternary structure, homodimer.

It catalyses the reaction Hydrolysis of Ala-|-Gly bond in repressor LexA.. Represses a number of genes involved in the response to DNA damage (SOS response), including recA and lexA. In the presence of single-stranded DNA, RecA interacts with LexA causing an autocatalytic cleavage which disrupts the DNA-binding part of LexA, leading to derepression of the SOS regulon and eventually DNA repair. The protein is LexA repressor of Staphylococcus aureus (strain Mu3 / ATCC 700698).